A 471-amino-acid polypeptide reads, in one-letter code: Sulfate adenylyltransferase subunit 1 (471 aa).

One can recognise a tr-type G domain in the interval 24–240 (KSLLRFLTCG…ESADVERELE (217 aa)). The segment at 33-40 (GSVDDGKS) is G1. Position 33–40 (33–40 (GSVDDGKS)) interacts with GTP. A G2 region spans residues 91-95 (GITID). The segment at 112–115 (DTPG) is G3. Residues 112–116 (DTPGH) and 167–170 (NKMD) each bind GTP. The G4 stretch occupies residues 167 to 170 (NKMD). Positions 204–206 (SAL) are G5.

The protein belongs to the TRAFAC class translation factor GTPase superfamily. Classic translation factor GTPase family. CysN/NodQ subfamily. In terms of assembly, heterodimer composed of CysD, the smaller subunit, and CysN.

The catalysed reaction is sulfate + ATP + H(+) = adenosine 5'-phosphosulfate + diphosphate. The protein operates within sulfur metabolism; hydrogen sulfide biosynthesis; sulfite from sulfate: step 1/3. In terms of biological role, with CysD forms the ATP sulfurylase (ATPS) that catalyzes the adenylation of sulfate producing adenosine 5'-phosphosulfate (APS) and diphosphate, the first enzymatic step in sulfur assimilation pathway. APS synthesis involves the formation of a high-energy phosphoric-sulfuric acid anhydride bond driven by GTP hydrolysis by CysN coupled to ATP hydrolysis by CysD. The polypeptide is Sulfate adenylyltransferase subunit 1 (Aeromonas salmonicida (strain A449)).